We begin with the raw amino-acid sequence, 65 residues long: Large ribosomal subunit protein uL29 (65 aa).

The protein belongs to the universal ribosomal protein uL29 family.

The sequence is that of Large ribosomal subunit protein uL29 from Lactobacillus helveticus (strain DPC 4571).